Here is a 672-residue protein sequence, read N- to C-terminus: Acetoacetyl-CoA synthetase (672 aa).

It belongs to the ATP-dependent AMP-binding enzyme family.

It is found in the cytoplasm. Its subcellular location is the cytosol. It catalyses the reaction acetoacetate + ATP + CoA = acetoacetyl-CoA + AMP + diphosphate. Functionally, converts acetoacetate to acetoacetyl-CoA in the cytosol. Ketone body-utilizing enzyme, responsible for the synthesis of cholesterol and fatty acids. This Mus musculus (Mouse) protein is Acetoacetyl-CoA synthetase (Aacs).